Reading from the N-terminus, the 1706-residue chain is Cadherin-99C (1706 aa).

Residues 1–28 form the signal peptide; that stretch reads MAARNSLTPQQGLGFFGLLILLCSAVLG. Residues 29-1395 lie on the Extracellular side of the membrane; it reads KSQMCEVETG…AIDNEVFPFT (1367 aa). 11 Cadherin domains span residues 68 to 142, 143 to 264, 277 to 387, 388 to 500, 519 to 604, 605 to 704, 707 to 807, 808 to 908, 909 to 1005, 1038 to 1148, and 1156 to 1270; these read DPDT…APRF, MNTP…DPSF, INPE…PPVI, SSSQ…APKL, VTQV…PPRF, QKPI…NPEF, STLP…VPKF, SDAR…PPRF, ITVP…RVDV, SDDS…APEF, and QQDT…ALSF. Residues Asn105 and Asn188 are each glycosylated (N-linked (GlcNAc...) asparagine). Asn442, Asn553, Asn620, and Asn753 each carry an N-linked (GlcNAc...) asparagine glycan. N-linked (GlcNAc...) asparagine glycosylation is found at Asn1053, Asn1088, and Asn1108. N-linked (GlcNAc...) asparagine glycosylation is found at Asn1311 and Asn1367. The chain crosses the membrane as a helical span at residues 1396–1416; it reads LIAISLVILILGTIGIIYICI. At 1417–1706 the chain is on the cytoplasmic side; that stretch reads SWSKYKNFKQ…RSEVETTTEL (290 aa).

As to quaternary structure, interacts (via the cytoplasmic domain) with ck. Interacts (via the cytoplasmic domain) with Cul1 and Ubr3.

Its subcellular location is the apical cell membrane. It localises to the endosome membrane. The protein localises to the cell projection. The protein resides in the microvillus membrane. In terms of biological role, cadherin that functions in epithelial morphogenesis and the intestine epithelial immune response. Essential for female fertility. Regulates the length and organization of apical microvilli in developing follicle cells and salivary glands. Function in the follicle cell is essential for egg development as the microvilli secrete eggshell material such as the vitelline membrane. Acts at least in part by regulating the recruitment of the myosin ck to the follicle cell microvilli. Also required to regulate cell rearrangements during salivary tube elongation, possibly by modulating cellular adhesion between the apical surface and apical extracellular matrix during epithelial tube elongation. May also function in cellular adhesion during the development of other tubular epithelia such as the trachea. Possibly functions as an apical membrane determinant which acts in apical membrane expansion during salivary and tracheal epithelial tube elongation. In salivary gland development, this function is independent of the other apical membrane determinants crb and sas. Essential downstream component of a hh-signaling pathway which regulates the Duox-dependent gut epithelial immune response to bacterial uracil; required for endosome formation in the enterocyte and activating norpA-dependent Ca2+ mobilization, which are essential steps in the Duox-dependent production of reactive oxygen species (ROS) in response to intestinal bacterial infection. In Drosophila melanogaster (Fruit fly), this protein is Cadherin-99C.